The chain runs to 212 residues: Bcl-2-related ovarian killer protein (212 aa).

Residue Ser7 is modified to Phosphoserine. The tract at residues 15-45 (MDAFDRSPTDKELVAQAKALGREYVHARLLR) is interactions with ITPR1. Glycyl lysine isopeptide (Lys-Gly) (interchain with G-Cter in ubiquitin) cross-links involve residues Lys25 and Lys32. The BH4 signature appears at 32-44 (KALGREYVHARLL). The short motif at 66 to 82 (VCAVLLRLGDELEMIRP) is the BH3 element. The tract at residues 70 to 78 (LLRLGDELE) is nuclear export signal. A BH1 motif is present at residues 112-131 (HIFSAGITWGKVVSLYAVAA). Glycyl lysine isopeptide (Lys-Gly) (interchain with G-Cter in ubiquitin) cross-links involve residues Lys159 and Lys176. The BH2 motif lies at 164-178 (WLRRRGGWTDVLKCV). A helical membrane pass occupies residues 189–209 (WLVAALCSFGRFLKAAFFVLL).

It belongs to the Bcl-2 family. Monomer; positively regulates apoptotic process. Homodimer. Heterodimer. Oligomer; promoted by apoptotic stimuli and BH3-only proteins; mediates constitutive activation. Interacts (via BH4 domain) with ITPR1; enhances BOK expression and stabilization; limits apoptosis and prevents ubiquitination and then degradation; protects ITPR1 from proteolysis by CASP3 during apoptosis. Interacts with ITPR2 and ITPR3; binds most strongly to ITPR2, and barely to ITPR3; regulates their expression. Interacts with XPO1; translocates to the cytoplasm. Interacts with BNIP3; promotes oligomerization. Post-translationally, ubiquitinated by AMFR/gp78 E3 ubiquitin ligase complex; mediates degradation by ubiquitin-proteasome pathway in a VCP/p97-dependent manner; prevents from pro-apoptotic activity; promotes degradation of newly synthesized proteins that are not ITPR1 associated. In terms of tissue distribution, expressed mainly in oocytes; weak expression in granulosa cells of the developing follicles. In adult human ovaries, expressed in granulosa cells at all follicular stages, but expression in primordial/primary follicles granulosa cell is stronger than in secondary and antral follicles.

It localises to the mitochondrion membrane. It is found in the endoplasmic reticulum membrane. The protein resides in the mitochondrion inner membrane. The protein localises to the cytoplasm. Its subcellular location is the nucleus. It localises to the mitochondrion. It is found in the endoplasmic reticulum. The protein resides in the mitochondrion outer membrane. The protein localises to the early endosome membrane. Its subcellular location is the recycling endosome membrane. It localises to the nucleus outer membrane. It is found in the golgi apparatus. The protein resides in the cis-Golgi network membrane. The protein localises to the trans-Golgi network membrane. Its subcellular location is the membrane. Its function is as follows. Apoptosis regulator that functions through different apoptotic signaling pathways. Plays a roles as pro-apoptotic protein that positively regulates intrinsic apoptotic process in a BAX- and BAK1-dependent manner or in a BAX- and BAK1-independent manner. In response to endoplasmic reticulum stress promotes mitochondrial apoptosis through downstream BAX/BAK1 activation and positive regulation of PERK-mediated unfolded protein response. Activates apoptosis independently of heterodimerization with survival-promoting BCL2 and BCL2L1 through induction of mitochondrial outer membrane permeabilization, in a BAX- and BAK1-independent manner, in response to inhibition of ERAD-proteasome degradation system, resulting in cytochrome c release. In response to DNA damage, mediates intrinsic apoptotic process in a TP53-dependent manner. Plays a role in granulosa cell apoptosis by CASP3 activation. Plays a roles as anti-apoptotic protein during neuronal apoptotic process, by negatively regulating poly ADP-ribose polymerase-dependent cell death through regulation of neuronal calcium homeostasis and mitochondrial bioenergetics in response to NMDA excitation. In addition to its role in apoptosis, may regulate trophoblast cell proliferation during the early stages of placental development, by acting on G1/S transition through regulation of CCNE1 expression. May also play a role as an inducer of autophagy by disrupting interaction between MCL1 and BECN1. In terms of biological role, pro-apoptotic molecule exerting its function through the mitochondrial pathway. This chain is Bcl-2-related ovarian killer protein, found in Homo sapiens (Human).